The chain runs to 540 residues: Chaperonin GroEL 3 (540 aa).

Residues 30–33 (TLGP), K51, 87–91 (DGTTT), G415, 480–482 (NAA), and D496 each bind ATP.

Belongs to the chaperonin (HSP60) family. As to quaternary structure, forms a cylinder of 14 subunits composed of two heptameric rings stacked back-to-back. Interacts with the co-chaperonin GroES.

The protein localises to the cytoplasm. The enzyme catalyses ATP + H2O + a folded polypeptide = ADP + phosphate + an unfolded polypeptide.. Functionally, together with its co-chaperonin GroES, plays an essential role in assisting protein folding. The GroEL-GroES system forms a nano-cage that allows encapsulation of the non-native substrate proteins and provides a physical environment optimized to promote and accelerate protein folding. The chain is Chaperonin GroEL 3 from Bradyrhizobium sp. (strain BTAi1 / ATCC BAA-1182).